Reading from the N-terminus, the 353-residue chain is Feruloyl esterase B (353 aa).

The N-terminal stretch at 1–18 (MAIPLVLVLAWLLPVVLA) is a signal peptide. The catalytic stretch occupies residues 19-291 (ASLTQVNNFG…VSVVLDWFGI (273 aa)). Ser136 serves as the catalytic Charge relay system. N-linked (GlcNAc...) asparagine glycans are attached at residues Asn179 and Asn246. Positions 317-353 (CTAAHWAQCGGIGYSGCTACASPYTCQKANDYYSQCL) constitute a CBM1 domain.

This sequence belongs to the carbohydrate esterase 1 (CE1) family. Feruloyl esterase type B subfamily. In terms of processing, glycosylated.

The protein localises to the secreted. It carries out the reaction feruloyl-polysaccharide + H2O = ferulate + polysaccharide.. Its activity is regulated as follows. Inhibited by the specific serine esterase inhibitor AEBSF. Functionally, involved in degradation of plant cell walls. Hydrolyzes the feruloyl-arabinose ester bond in arabinoxylans, and the feruloyl-galactose and feruloyl-arabinose ester bonds in pectin. Binds strongly to cellulose. The protein is Feruloyl esterase B (FAEB) of Talaromyces funiculosus (Fruitlet core rot fungus).